The primary structure comprises 414 residues: Nucleoredoxin (414 aa).

The Thioredoxin domain maps to 131–305 (LLVKDDPEGL…ELNAVQLNEG (175 aa)).

Belongs to the nucleoredoxin family.

It localises to the cytoplasm. Its subcellular location is the cytosol. The protein resides in the nucleus. It carries out the reaction [protein]-dithiol + NAD(+) = [protein]-disulfide + NADH + H(+). The catalysed reaction is [protein]-dithiol + NADP(+) = [protein]-disulfide + NADPH + H(+). Its function is as follows. Functions as a redox-dependent negative regulator of the Wnt signaling pathway. The polypeptide is Nucleoredoxin (nxn) (Xenopus laevis (African clawed frog)).